A 350-amino-acid chain; its full sequence is Small ribosomal subunit biogenesis GTPase RsgA (350 aa).

The disordered stretch occupies residues M1 to K30. The segment covering T7–K20 has biased composition (polar residues). Residues T21–K30 are compositionally biased toward basic residues. A CP-type G domain is found at H106 to F274. Residues N162–D165 and G216–S224 each bind GTP. Zn(2+) is bound by residues C298, C303, H305, and C311.

It belongs to the TRAFAC class YlqF/YawG GTPase family. RsgA subfamily. In terms of assembly, monomer. Associates with 30S ribosomal subunit, binds 16S rRNA. Requires Zn(2+) as cofactor.

It is found in the cytoplasm. One of several proteins that assist in the late maturation steps of the functional core of the 30S ribosomal subunit. Helps release RbfA from mature subunits. May play a role in the assembly of ribosomal proteins into the subunit. Circularly permuted GTPase that catalyzes slow GTP hydrolysis, GTPase activity is stimulated by the 30S ribosomal subunit. This Histophilus somni (strain 2336) (Haemophilus somnus) protein is Small ribosomal subunit biogenesis GTPase RsgA.